The following is a 365-amino-acid chain: Chorismate synthase (365 aa).

The tract at residues 41 to 60 (MQHDLDRRRPGTSRYTTARR) is disordered. NADP(+) contacts are provided by Arg48 and Arg54. FMN contacts are provided by residues 125–127 (RSS), 238–239 (NA), Gly278, 293–297 (KPTSS), and Arg319.

This sequence belongs to the chorismate synthase family. In terms of assembly, homotetramer. Requires FMNH2 as cofactor.

It catalyses the reaction 5-O-(1-carboxyvinyl)-3-phosphoshikimate = chorismate + phosphate. The protein operates within metabolic intermediate biosynthesis; chorismate biosynthesis; chorismate from D-erythrose 4-phosphate and phosphoenolpyruvate: step 7/7. In terms of biological role, catalyzes the anti-1,4-elimination of the C-3 phosphate and the C-6 proR hydrogen from 5-enolpyruvylshikimate-3-phosphate (EPSP) to yield chorismate, which is the branch point compound that serves as the starting substrate for the three terminal pathways of aromatic amino acid biosynthesis. This reaction introduces a second double bond into the aromatic ring system. This is Chorismate synthase from Shewanella amazonensis (strain ATCC BAA-1098 / SB2B).